Reading from the N-terminus, the 217-residue chain is uncharacterized protein (217 aa).

A helical membrane pass occupies residues valine 26–alanine 48.

The protein resides in the membrane. This is an uncharacterized protein from Archaeoglobus fulgidus (strain ATCC 49558 / DSM 4304 / JCM 9628 / NBRC 100126 / VC-16).